The sequence spans 458 residues: MASEDKKSKREHIIHFEDTPSKSLDEVNGSVEVPHNAGFWKTLAAYTGPGILVAVGYMDPGNWITSIAGGASFKYSLLSVILISSLIAMLLQAMAARLGIVTGRDLAQMTRDHTSKAMGGFLWVITELAIMATDIAEIIGSAIALKLLFNMPLIVGIIITTADVLILLLLMRLGFRKIEAVVATLVLVILLVFAYEVILAQPNVPELLKGYLPHADIVTNKSMLYLSLGIVGATVMPHDLFLGSSISQTRKIDRTKHEEVKKAIKFSTIDSNLQLTMAFIVNSLLLILGAALFFGTSSSVGRFVDLFNALSNSQIVGAIASPMLSMLFAVALLASGQSSTITGTLAGQIIMEGFIHLKMPLWAQRLLTRLMSVTPVLIFAIYYHGNEAKIENLLTFSQVFLSIALPFAVIPLVLYTSDKKIMGEFANRAWVKWTAWFISGVLIILNLYLIAQTLGFVK.

11 helical membrane-spanning segments follow: residues 38–58, 76–96, 119–139, 151–171, 180–200, 223–243, 275–295, 315–335, 370–390, 393–413, and 437–457; these read GFWKTLAAYTGPGILVAVGYM, SLLSVILISSLIAMLLQAMAA, GGFLWVITELAIMATDIAEII, MPLIVGIIITTADVLILLLLM, AVVATLVLVILLVFAYEVILA, MLYLSLGIVGATVMPHDLFLG, LTMAFIVNSLLLILGAALFFG, IVGAIASPMLSMLFAVALLAS, LMSVTPVLIFAIYYHGNEAKI, LLTFSQVFLSIALPFAVIPLV, and FISGVLIILNLYLIAQTLGFV.

This sequence belongs to the NRAMP family.

The protein localises to the cell membrane. Functionally, h(+)-stimulated, divalent metal cation uptake system. The sequence is that of Divalent metal cation transporter MntH from Lacticaseibacillus casei (strain BL23) (Lactobacillus casei).